Reading from the N-terminus, the 255-residue chain is Dehydrogenase/reductase SDR family member 11 (255 aa).

Positions M1 to A25 are cleaved as a signal peptide. NADP(+)-binding positions include G13–I18, R38–T39, E44, D65–L66, and N92. Substrate-binding residues include S146 and Y161. NADP(+) contacts are provided by residues Y161, K165, V196–Q199, and K203. The active-site Proton acceptor is Y161.

It belongs to the short-chain dehydrogenases/reductases (SDR) family.

The protein resides in the secreted. The enzyme catalyses a 3beta-hydroxysteroid + NADP(+) = a 3-oxosteroid + NADPH + H(+). It catalyses the reaction 17beta-estradiol + NAD(+) = estrone + NADH + H(+). It carries out the reaction 17beta-estradiol + NADP(+) = estrone + NADPH + H(+). Its pathway is steroid biosynthesis; estrogen biosynthesis. With respect to regulation, inhibited by flavonoids including apigenin, luteolin, genistein, kaempferol and quercetin and also by carbenoxolone, zearalenone, glycyrrhetinic, curcumin and flufenamic acid. In terms of biological role, catalyzes the conversion of the 17-keto group of estrone, 4- and 5-androstenes and 5-alpha-androstanes into their 17-beta-hydroxyl metabolites and the conversion of the 3-keto group of 3-, 3,17- and 3,20- diketosteroids into their 3-hydroxyl metabolites. Exhibits reductive 3-beta-hydroxysteroid dehydrogenase activity toward 5-beta-androstanes, 5-beta-pregnanes, 4-pregnenes and bile acids. May also reduce endogenous and exogenous alpha-dicarbonyl compounds and xenobiotic alicyclic ketones. This Bos taurus (Bovine) protein is Dehydrogenase/reductase SDR family member 11 (DHRS11).